Consider the following 541-residue polypeptide: Arginine--tRNA ligase (541 aa).

A 'HIGH' region motif is present at residues 119 to 129; that stretch reads ANPTGPLHIGH.

Belongs to the class-I aminoacyl-tRNA synthetase family. As to quaternary structure, monomer.

It is found in the cytoplasm. It carries out the reaction tRNA(Arg) + L-arginine + ATP = L-arginyl-tRNA(Arg) + AMP + diphosphate. In Helicobacter pylori (strain ATCC 700392 / 26695) (Campylobacter pylori), this protein is Arginine--tRNA ligase (argS).